Reading from the N-terminus, the 300-residue chain is NAD kinase (300 aa).

The active-site Proton acceptor is the aspartate 80. Residues 80–81 (DG), 154–155 (ND), arginine 165, arginine 182, aspartate 184, 195–200 (TAYALS), and glutamine 253 contribute to the NAD(+) site.

Belongs to the NAD kinase family. Requires a divalent metal cation as cofactor.

It is found in the cytoplasm. The catalysed reaction is NAD(+) + ATP = ADP + NADP(+) + H(+). Functionally, involved in the regulation of the intracellular balance of NAD and NADP, and is a key enzyme in the biosynthesis of NADP. Catalyzes specifically the phosphorylation on 2'-hydroxyl of the adenosine moiety of NAD to yield NADP. This is NAD kinase from Aromatoleum aromaticum (strain DSM 19018 / LMG 30748 / EbN1) (Azoarcus sp. (strain EbN1)).